Here is a 146-residue protein sequence, read N- to C-terminus: Probable calcium-binding protein CML40 (146 aa).

The region spanning 7–42 is the EF-hand 1 domain; sequence NKRDEYQRVFSCFDKSHQGKVSVSTIERCVDAIKSG. The segment at 44–65 is disordered; sequence RAVVDQEDTTNPNPEESTDDKS. In terms of domain architecture, EF-hand 2 spans 116 to 146; the sequence is KSLKDCEVMISQFDINRDGIINFDEFRAMMQ. Ca(2+)-binding residues include Asp-129, Asn-131, Asp-133, and Glu-140.

In terms of biological role, potential calcium sensor. The protein is Probable calcium-binding protein CML40 (CML40) of Arabidopsis thaliana (Mouse-ear cress).